A 243-amino-acid chain; its full sequence is PF03932 family protein CutC (243 aa).

It belongs to the CutC family.

The protein resides in the cytoplasm. This chain is PF03932 family protein CutC, found in Histophilus somni (strain 2336) (Haemophilus somnus).